The chain runs to 190 residues: Ribosome hibernation promotion factor (190 aa).

The segment at 101-190 is required for ribosome-binding; it reads RDRGDQEVFV…KYGLIQTSEQ (90 aa).

It belongs to the HPF/YfiA ribosome-associated protein family. Long HPF subfamily. In terms of assembly, interacts with 100S ribosomes during exponential growth, as 100S ribosomes decrease (after 28 hours) also found associated with 30s and 50S subunits.

It localises to the cytoplasm. Its function is as follows. Required and sufficient for dimerization of active 70S ribosomes into 100S ribosomes. 110S ribosomes are probably translationally inactive and may serve as a reservoir of easily reactivated ribosomes when necessary in the cell. Also reduces the translation efficiency of a small number of genes. Unlike E.coli, 100S ribosomes are present during exponential growth and decrease during stationary phase. This strain produces 30% fewer 100S ribosomes than strain N315 and RN4200 under the same growth conditions. This chain is Ribosome hibernation promotion factor, found in Staphylococcus aureus (strain USA300).